Reading from the N-terminus, the 224-residue chain is Cysteine S-methyltransferase NleE (224 aa).

Residues 49 to 52 (GITR) are interaction with host proteins TAB2, TAB3 and ZRANB3. Residues A92, S98, R107, Q111, Y204, and E208 each coordinate S-adenosyl-L-methionine.

Belongs to the NleE/OspZ family. As to quaternary structure, monomer.

Its subcellular location is the secreted. It localises to the host nucleus. It carries out the reaction L-cysteinyl-[protein] + S-adenosyl-L-methionine = S-methyl-L-cysteinyl-[protein] + S-adenosyl-L-homocysteine + H(+). Its function is as follows. Cysteine methyltransferase effector that inhibits host cell NF-kappa-B activation by preventing nuclear translocation of host protein RELA/p65. Acts by mediating cysteine methylation of host proteins TAB2 and TAB3: methylation of a conserved cysteine residue of the RanBP2-type zinc finger (NZF) of TAB2 and TAB3 disrupts zinc-binding, thereby inactivating the ubiquitin chain-binding activity of TAB2 and TAB3, leading to NF-kappa-B inactivation. Also mediates cysteine methylation of host protein ZRANB3, inactivating its ability to bind ubiquitin chains. The protein is Cysteine S-methyltransferase NleE of Escherichia coli O127:H6 (strain E2348/69 / EPEC).